A 1019-amino-acid chain; its full sequence is Clotting factor C (1019 aa).

Positions 1-25 (MVLASFLVSGLVLGILAQQMRPVQS) are cleaved as a signal peptide. An EGF-like domain is found at 102–137 (YGTWCSGECQCKNGGICDQRTGACTCRDRYEGAHCE). Intrachain disulfides connect Cys110-Cys118, Cys112-Cys125, Cys127-Cys136, Cys142-Cys182, Cys168-Cys195, Cys199-Cys241, Cys227-Cys254, Cys260-Cys308, Cys294-Cys321, Cys331-Cys350, Cys354-Cys374, Cys464-Cys564, Cys538-Cys556, Cys576-Cys621, Cys607-Cys634, and Cys720-Cys748. 3 consecutive Sushi domains span residues 140-197 (KGCP…KCIR), 198-256 (ECAK…QCKK), and 258-323 (VFCP…SCVK). An LCCL domain is found at 325 to 421 (ADREVDCDSK…EELKSLARSF (97 aa)). The region spanning 436–568 (CPDGWFEVEE…PSSFACMMDL (133 aa)) is the C-type lectin domain. 2 N-linked (GlcNAc...) asparagine glycosylation sites follow: Asn523 and Asn534. Sushi domains are found at residues 574–636 (AKCD…RCIK) and 689–750 (PRSS…SCIP). N-linked (GlcNAc...) asparagine glycans are attached at residues Asn624, Asn740, and Asn767. The 257-residue stretch at 763 to 1019 (IWNGNSTEIG…VFLSWIRQFI (257 aa)) folds into the Peptidase S1 domain. Residues Cys794 and Cys810 are joined by a disulfide bond. Residues His809 and Asp865 each act as charge relay system in the active site. Asn912 carries an N-linked (GlcNAc...) asparagine glycan. Cys932 and Cys951 are oxidised to a cystine. Residue Asp960 participates in substrate binding. The cysteines at positions 962 and 996 are disulfide-linked. Ser966 serves as the catalytic Charge relay system.

It belongs to the peptidase S1 family. As to quaternary structure, heterodimer of a light chain and a heavy chain linked by a disulfide bond. Forms a covalent heterodimer with intracellular coagulation inhibitor 1/LICI-1. Forms a covalent heterodimer with intracellular coagulation inhibitor 2/LICI-2. Post-translationally, N-glycosylated. Lipopolysaccharide (LPS) activates clotting factor C by inducing the proteolytic cleavage of the clotting factor C light chain into clotting factor C chains A and B. Clotting factor C chains heavy, A and B remain associated via interchain disulfide bonds. As to expression, expressed in hemocytes (at protein level).

The protein resides in the secreted. It catalyses the reaction Selective cleavage of 103-Arg-|-Ser-104 and 124-Ile-|-Ile-125 bonds in Limulus clotting factor B to form activated factor B. Cleavage of -Pro-Arg-|-Xaa- bonds in synthetic substrates.. Its activity is regulated as follows. Activated by Gram-negative bacterial lipopolysaccharides. Inhibited by intracellular coagulation inhibitor 1/LICI-1 and to a lesser extent by intracellular coagulation inhibitors 2/LICI-2 and 3/LICI-3. Inhibited by the small molecule diisopropyl fluorophosphate (DFP). In terms of biological role, this enzyme is closely associated with an endotoxin-sensitive hemolymph coagulation system which may play important roles in both hemostasis and host defense mechanisms. Its active form catalyzes the activation of clotting factor B. The chain is Clotting factor C from Tachypleus tridentatus (Japanese horseshoe crab).